Consider the following 1065-residue polypeptide: N-terminal acetyltransferase B complex auxiliary subunit NAA25 (1065 aa).

One copy of the TPR repeat lies at 294–327 (VDKLRIQGRLLARANDYSAAVDVYKKILELSPDD).

It belongs to the MDM20/NAA25 family. Ubiquitously expressed, with a higher expression in vascular bundles, hydathodes, leaf primordia and the base of the trichomes.

The protein resides in the cytoplasm. Its function is as follows. Auxiliary subunit of the NatB N-alpha-acetyltransferase complex. Required for flowering time regulation and for vegetative and reproductive plant development. In Arabidopsis thaliana (Mouse-ear cress), this protein is N-terminal acetyltransferase B complex auxiliary subunit NAA25.